Here is a 310-residue protein sequence, read N- to C-terminus: uncharacterized protein (310 aa).

Histidine 239 is an active-site residue.

Belongs to the IUNH family.

It localises to the cytoplasm. The protein resides in the nucleus. This is an uncharacterized protein from Schizosaccharomyces pombe (strain 972 / ATCC 24843) (Fission yeast).